Reading from the N-terminus, the 701-residue chain is DNA ligase (701 aa).

Residues 50–54, 99–100, and E130 contribute to the NAD(+) site; these read DYEYD and SL. The active-site N6-AMP-lysine intermediate is K132. NAD(+)-binding residues include R153, E187, K301, and K325. Zn(2+) is bound by residues C419, C422, C437, and C442. One can recognise a BRCT domain in the interval 626–701; that stretch reads NEHQKYMNKT…EIITEPFWDN (76 aa).

Belongs to the NAD-dependent DNA ligase family. LigA subfamily. Mg(2+) is required as a cofactor. Requires Mn(2+) as cofactor.

It carries out the reaction NAD(+) + (deoxyribonucleotide)n-3'-hydroxyl + 5'-phospho-(deoxyribonucleotide)m = (deoxyribonucleotide)n+m + AMP + beta-nicotinamide D-nucleotide.. Functionally, DNA ligase that catalyzes the formation of phosphodiester linkages between 5'-phosphoryl and 3'-hydroxyl groups in double-stranded DNA using NAD as a coenzyme and as the energy source for the reaction. It is essential for DNA replication and repair of damaged DNA. This chain is DNA ligase, found in Malacoplasma penetrans (strain HF-2) (Mycoplasma penetrans).